A 327-amino-acid chain; its full sequence is Ribosomal RNA large subunit methyltransferase F (327 aa).

Belongs to the methyltransferase superfamily. METTL16/RlmF family.

The protein localises to the cytoplasm. The enzyme catalyses adenosine(1618) in 23S rRNA + S-adenosyl-L-methionine = N(6)-methyladenosine(1618) in 23S rRNA + S-adenosyl-L-homocysteine + H(+). Functionally, specifically methylates the adenine in position 1618 of 23S rRNA. This chain is Ribosomal RNA large subunit methyltransferase F, found in Marinomonas sp. (strain MWYL1).